The chain runs to 247 residues: Protein Thf1 (247 aa).

A coiled-coil region spans residues 198–224 (IAQVRQAMDDILEAQKKRREADQAKKE). A disordered region spans residues 209–247 (LEAQKKRREADQAKKEGSDDTPTTEASTPDSEPTSEVSS). Basic and acidic residues predominate over residues 210-226 (EAQKKRREADQAKKEGS). Positions 228–247 (DTPTTEASTPDSEPTSEVSS) are enriched in polar residues.

Belongs to the THF1 family.

May be involved in photosynthetic membrane biogenesis. The protein is Protein Thf1 of Acaryochloris marina (strain MBIC 11017).